Here is a 229-residue protein sequence, read N- to C-terminus: Heptaprenylglyceryl phosphate synthase (229 aa).

Mg(2+)-binding residues include D13 and T39.

This sequence belongs to the GGGP/HepGP synthase family. In terms of assembly, homodimer. Requires Mg(2+) as cofactor.

The enzyme catalyses sn-glycerol 1-phosphate + all-trans-heptaprenyl diphosphate = 3-heptaprenyl-sn-glycero-1-phosphate + diphosphate. It participates in membrane lipid metabolism; glycerophospholipid metabolism. Its function is as follows. Prenyltransferase that catalyzes in vivo the transfer of the heptaprenyl moiety of heptaprenyl pyrophosphate (HepPP; 35 carbon atoms) to the C3 hydroxyl of sn-glycerol-1-phosphate (G1P), producing heptaprenylglyceryl phosphate (HepGP). This reaction is an ether-bond-formation step in the biosynthesis of archaea-type G1P-based membrane lipids found in Bacillales. The sequence is that of Heptaprenylglyceryl phosphate synthase from Lysinibacillus sphaericus (strain C3-41).